A 416-amino-acid polypeptide reads, in one-letter code: Histidine--tRNA ligase (416 aa).

Belongs to the class-II aminoacyl-tRNA synthetase family. Homodimer.

The protein resides in the cytoplasm. The enzyme catalyses tRNA(His) + L-histidine + ATP = L-histidyl-tRNA(His) + AMP + diphosphate + H(+). The polypeptide is Histidine--tRNA ligase (Clostridium kluyveri (strain NBRC 12016)).